The primary structure comprises 168 residues: Putative adenylate kinase (168 aa).

G10, G12, K13, T14, and T15 together coordinate ATP. Positions 28-51 (HLNERIREEGLDAGRDEERDSLVA) are NMP. The segment at 97 to 107 (DRGEPAAKAAE) is LID. Residue R98 participates in ATP binding.

This sequence belongs to the adenylate kinase family. AK6 subfamily. As to quaternary structure, interacts with uS11. Not a structural component of 40S pre-ribosomes, but transiently interacts with them by binding to uS11.

It catalyses the reaction AMP + ATP = 2 ADP. It carries out the reaction ATP + H2O = ADP + phosphate + H(+). In terms of biological role, broad-specificity nucleoside monophosphate (NMP) kinase that catalyzes the reversible transfer of the terminal phosphate group between nucleoside triphosphates and monophosphates. Also has ATPase activity. Involved in the late maturation steps of the 30S ribosomal particles, specifically 16S rRNA maturation. While NMP activity is not required for ribosome maturation, ATPase activity is. Associates transiently with small ribosomal subunit protein uS11. ATP hydrolysis breaks the interaction with uS11. May temporarily remove uS11 from the ribosome to enable a conformational change of the ribosomal RNA that is needed for the final maturation step of the small ribosomal subunit. The sequence is that of Putative adenylate kinase from Natronomonas pharaonis (strain ATCC 35678 / DSM 2160 / CIP 103997 / JCM 8858 / NBRC 14720 / NCIMB 2260 / Gabara) (Halobacterium pharaonis).